The primary structure comprises 144 residues: Small polypeptide DEVIL 15 (144 aa).

N-linked (GlcNAc...) asparagine glycosylation occurs at Asn-8. The disordered stretch occupies residues 22-63; the sequence is SSSSKPFFTRSFSTKTSSSPSSKSHFTRSFSTKPSSSSSSSD. The chain crosses the membrane as a helical span at residues 104 to 120; sequence ILSKKGASVTGKCFKVA. The required for DVL/RTFL small polypeptide activity stretch occupies residues 111–142; that stretch reads SVTGKCFKVAKEHKSRFYIIKRCVLMLVCWHK.

It belongs to the DVL/RTFL small polypeptides family.

Its subcellular location is the cell membrane. Functionally, small polypeptide acting as a regulatory molecule which coordinates cellular responses required for differentiation, growth and development, probably by restricting polar cell proliferation in lateral organs and coordinating socket cell recruitment and differentiation at trichome sites. The sequence is that of Small polypeptide DEVIL 15 from Arabidopsis thaliana (Mouse-ear cress).